We begin with the raw amino-acid sequence, 293 residues long: Ribosomal RNA small subunit methyltransferase H (293 aa).

S-adenosyl-L-methionine-binding positions include 32-34 (GGH), D51, F78, D99, and Q106. The tract at residues 274 to 293 (DEIRENPASRSAKMRVARRL) is disordered.

The protein belongs to the methyltransferase superfamily. RsmH family.

The protein localises to the cytoplasm. The enzyme catalyses cytidine(1402) in 16S rRNA + S-adenosyl-L-methionine = N(4)-methylcytidine(1402) in 16S rRNA + S-adenosyl-L-homocysteine + H(+). Its function is as follows. Specifically methylates the N4 position of cytidine in position 1402 (C1402) of 16S rRNA. The chain is Ribosomal RNA small subunit methyltransferase H from Sulfurihydrogenibium azorense (strain DSM 15241 / OCM 825 / Az-Fu1).